A 554-amino-acid chain; its full sequence is Inactive serine/threonine-protein kinase/endoribonuclease IRE1-like (554 aa).

Residues 1–17 (MWLLAISLVGLLVVVVC) form the signal peptide. The segment at 36–85 (KRDKNSAPRVSASGEDGTKNEQVEKKSDPSGGLGEENEKTNSESKVLSVP) is disordered. Residues 51-63 (DGTKNEQVEKKSD) show a composition bias toward basic and acidic residues. One can recognise a Protein kinase domain in the interval 121–408 (LVSTNEMKYG…ATQVLLHPLF (288 aa)). Position 150 (K150) interacts with ATP. The 144-residue stretch at 411–554 (SEKRLFFLRE…GEEAFEKYFN (144 aa)) folds into the KEN domain.

It belongs to the protein kinase superfamily. Ser/Thr protein kinase family.

This Arabidopsis thaliana (Mouse-ear cress) protein is Inactive serine/threonine-protein kinase/endoribonuclease IRE1-like.